The sequence spans 158 residues: Endoribonuclease YbeY (158 aa).

Zn(2+) contacts are provided by histidine 122, histidine 126, and histidine 132.

It belongs to the endoribonuclease YbeY family. Zn(2+) serves as cofactor.

It localises to the cytoplasm. In terms of biological role, single strand-specific metallo-endoribonuclease involved in late-stage 70S ribosome quality control and in maturation of the 3' terminus of the 16S rRNA. In Bacillus licheniformis (strain ATCC 14580 / DSM 13 / JCM 2505 / CCUG 7422 / NBRC 12200 / NCIMB 9375 / NCTC 10341 / NRRL NRS-1264 / Gibson 46), this protein is Endoribonuclease YbeY.